Here is an 861-residue protein sequence, read N- to C-terminus: Protein argonaute-4 (861 aa).

Residues 219 to 338 (PIIEFMCEVL…LPLEVCNIVA (120 aa)) form the PAZ domain. The Piwi domain maps to 509 to 820 (LIVVILPGKT…VAFRARYHLV (312 aa)). The disordered stretch occupies residues 825–846 (DSAEGSHVSGQSNGRDPQALAK).

It belongs to the argonaute family. Ago subfamily. In terms of assembly, interacts with EIF4B, IMP8, PRMT5, TNRC6A and TNRC6B. Interacts with ZFP36. Post-translationally, ubiquitinated on surface-exposed lysines by a SCF-like E3 ubiquitin-protein ligase complex containing ZSWIM8 during target-directed microRNA degradation (TDMD), a process that mediates degradation of microRNAs (miRNAs). Ubiquitination by the SCF-like E3 ubiquitin-protein ligase complex containing ZSWIM8 leads to its subsequent degradation, thereby exposing miRNAs for degradation. ZSWIM8 recognizes and binds AGO4 when it is engaged with a TDMD target.

Its subcellular location is the cytoplasm. The protein resides in the P-body. Functionally, required for RNA-mediated gene silencing (RNAi). Binds to short RNAs such as microRNAs (miRNAs) and represses the translation of mRNAs which are complementary to them. Lacks endonuclease activity and does not appear to cleave target mRNAs. The polypeptide is Protein argonaute-4 (Ago4) (Mus musculus (Mouse)).